Here is a 499-residue protein sequence, read N- to C-terminus: Probable malate:quinone oxidoreductase 4 (499 aa).

Belongs to the MQO family. The cofactor is FAD.

It catalyses the reaction (S)-malate + a quinone = a quinol + oxaloacetate. It functions in the pathway carbohydrate metabolism; tricarboxylic acid cycle; oxaloacetate from (S)-malate (quinone route): step 1/1. The chain is Probable malate:quinone oxidoreductase 4 from Staphylococcus epidermidis (strain ATCC 12228 / FDA PCI 1200).